The following is a 270-amino-acid chain: Interleukin-1 alpha (270 aa).

Residues Met-1 to Arg-114 constitute a propeptide that is removed on maturation. The N-linked (GlcNAc...) asparagine glycan is linked to Asn-46. N6-acetyllysine is present on Lys-85. Positions Lys-85–Leu-89 are nuclear localization signal (NLS). The residue at position 90 (Ser-90) is a Phosphoserine. N-linked (GlcNAc...) asparagine glycosylation is present at Asn-139.

Belongs to the IL-1 family. As to quaternary structure, monomer. Interacts with TMED10; the interaction mediates the translocation from the cytoplasm into the ERGIC (endoplasmic reticulum-Golgi intermediate compartment) and thereby secretion. Interacts with IL1R1. Interacts with S100A13; this interaction is the first step in the export of IL1A, followed by direct translocation of this complex across the plasma membrane. Post-translationally, acetylated within its nuclear localization sequence, which impacts subcellular localization. In terms of processing, proteolytic processed by CAPN1 in a calcium-dependent manner. Cleavage from 31 kDa precursor to 18 kDa biologically active molecules. Phosphorylated. Phosphorylation greatly enhances susceptibility to digestion and promotes the conversion of pre-IL1A alpha to the biologically active IL1A.

Its subcellular location is the nucleus. It is found in the cytoplasm. The protein resides in the secreted. Its function is as follows. Cytokine constitutively present intracellularly in nearly all resting non-hematopoietic cells that plays an important role in inflammation and bridges the innate and adaptive immune systems. After binding to its receptor IL1R1 together with its accessory protein IL1RAP, forms the high affinity interleukin-1 receptor complex. Signaling involves the recruitment of adapter molecules such as MYD88, IRAK1 or IRAK4. In turn, mediates the activation of NF-kappa-B and the three MAPK pathways p38, p42/p44 and JNK pathways. Within the cell, acts as an alarmin and cell death results in its liberation in the extracellular space after disruption of the cell membrane to induce inflammation and alert the host to injury or damage. In addition to its role as a danger signal, which occurs when the cytokine is passively released by cell necrosis, directly senses DNA damage and acts as signal for genotoxic stress without loss of cell integrity. The protein is Interleukin-1 alpha of Rattus norvegicus (Rat).